The following is a 184-amino-acid chain: Large ribosomal subunit protein uL6 (184 aa).

Belongs to the universal ribosomal protein uL6 family. In terms of assembly, part of the 50S ribosomal subunit.

Its function is as follows. This protein binds to the 23S rRNA, and is important in its secondary structure. It is located near the subunit interface in the base of the L7/L12 stalk, and near the tRNA binding site of the peptidyltransferase center. This Thermotoga petrophila (strain ATCC BAA-488 / DSM 13995 / JCM 10881 / RKU-1) protein is Large ribosomal subunit protein uL6.